Here is a 245-residue protein sequence, read N- to C-terminus: Probable transcriptional regulatory protein APH_0480 (245 aa).

This sequence belongs to the TACO1 family.

It is found in the cytoplasm. The protein is Probable transcriptional regulatory protein APH_0480 of Anaplasma phagocytophilum (strain HZ).